The chain runs to 324 residues: Protein FAM228B (324 aa).

This sequence belongs to the FAM228 family.

In Homo sapiens (Human), this protein is Protein FAM228B (FAM228B).